The primary structure comprises 381 residues: Cytochrome b (381 aa).

A run of 4 helical transmembrane segments spans residues 33–53 (FGSL…FLAM), 77–98 (WLLR…FLHV), 113–133 (WNIG…GYVL), and 178–198 (FFAF…VHLL). Residues His-83 and His-97 each contribute to the heme b site. Heme b-binding residues include His-182 and His-196. His-201 is an a ubiquinone binding site. 4 consecutive transmembrane segments (helical) span residues 226 to 246 (IKDA…ALFS), 288 to 308 (LGGV…PLLH), 320 to 340 (ISQT…WIGG), and 347 to 367 (FIII…VLMP).

It belongs to the cytochrome b family. In terms of assembly, the cytochrome bc1 complex contains 11 subunits: 3 respiratory subunits (MT-CYB, CYC1 and UQCRFS1), 2 core proteins (UQCRC1 and UQCRC2) and 6 low-molecular weight proteins (UQCRH/QCR6, UQCRB/QCR7, UQCRQ/QCR8, UQCR10/QCR9, UQCR11/QCR10 and a cleavage product of UQCRFS1). This cytochrome bc1 complex then forms a dimer. The cofactor is heme b.

Its subcellular location is the mitochondrion inner membrane. Functionally, component of the ubiquinol-cytochrome c reductase complex (complex III or cytochrome b-c1 complex) that is part of the mitochondrial respiratory chain. The b-c1 complex mediates electron transfer from ubiquinol to cytochrome c. Contributes to the generation of a proton gradient across the mitochondrial membrane that is then used for ATP synthesis. This Pseudantechinus bilarni (Sandstone dibbler) protein is Cytochrome b (MT-CYB).